Reading from the N-terminus, the 453-residue chain is Zinc finger and BTB domain-containing protein 44 (453 aa).

A Glycyl lysine isopeptide (Lys-Gly) (interchain with G-Cter in SUMO2) cross-link involves residue lysine 4. The BTB domain occupies 31-98 (CDITIRVQDK…AYTATLSINT (68 aa)). The residue at position 135 (serine 135) is a Phosphoserine. Positions 135 to 157 (SQPEKSLDAGQENSSNCNFTSRD) are disordered. The segment covering 145–157 (QENSSNCNFTSRD) has biased composition (polar residues). Residues serine 159, serine 161, serine 165, serine 191, serine 194, and serine 199 each carry the phosphoserine modification. Phosphothreonine is present on threonine 200. The tract at residues 241 to 266 (QPEKAKQAENTRTLELPGPSEAGRRV) is disordered. Residue lysine 290 forms a Glycyl lysine isopeptide (Lys-Gly) (interchain with G-Cter in SUMO2) linkage. Disordered stretches follow at residues 295 to 324 (SDEE…PGSE) and 336 to 366 (SSSI…ADDD). The segment covering 304–318 (SQPVSASQSSLSDQQ) has biased composition (low complexity). The segment covering 352–361 (TLQSTSSTNA) has biased composition (polar residues). C2H2-type zinc fingers lie at residues 399 to 421 (FQCP…MLIH) and 427 to 449 (FQCD…RLKH).

Its subcellular location is the nucleus. In Mus musculus (Mouse), this protein is Zinc finger and BTB domain-containing protein 44 (Zbtb44).